A 238-amino-acid polypeptide reads, in one-letter code: CD63 antigen (238 aa).

Residues 2–11 (AVEGGMKCVK) lie on the Cytoplasmic side of the membrane. The helical transmembrane segment at 12-32 (FLLYVLLLAFCACAVGLIAIG) threads the bilayer. Topologically, residues 33–51 (VAVQVVLKQAITHETTAGS) are extracellular. A helical membrane pass occupies residues 52–72 (LLPVVIIAVGAFLFLVAFVGC). The Cytoplasmic segment spans residues 73–81 (CGACKENYC). The chain crosses the membrane as a helical span at residues 82–102 (LMITFAIFLSLIMLVEVAVAI). The Extracellular portion of the chain corresponds to 103 to 203 (AGYVFRDQVK…TIAAWLRKNV (101 aa)). Asn-130, Asn-150, and Asn-172 each carry an N-linked (GlcNAc...) asparagine glycan. A helical transmembrane segment spans residues 204–224 (LLVAGAALGIAFVEVLGIIFS). Residues 225–238 (CCLVKSIRSGYEVM) lie on the Cytoplasmic side of the membrane. Residues 234–238 (GYEVM) carry the Lysosomal targeting motif motif.

It belongs to the tetraspanin (TM4SF) family. As to quaternary structure, interacts with TIMP1 and ITGB1 and recruits TIMP1 to ITGB1. Interacts with CD9. Identified in a complex with CD9 and ITGB3. Interacts with PMEL. Interacts with KDR/VEGFR2; identified in a complex with ITGB1 and KDR/VEGFR2 and is required to recruit KDR to ITGB1 complexes. Interacts with SYT7. In terms of processing, palmitoylated at a low, basal level in unstimulated platelets. The level of palmitoylation increases when platelets are activated by thrombin (in vitro). As to expression, detected in mast cells and platelets (at protein level).

The protein localises to the cell membrane. It is found in the lysosome membrane. It localises to the late endosome membrane. Its subcellular location is the endosome. The protein resides in the multivesicular body. The protein localises to the melanosome. It is found in the secreted. It localises to the extracellular exosome. Its subcellular location is the cell surface. In terms of biological role, functions as a cell surface receptor for TIMP1 and plays a role in the activation of cellular signaling cascades. Plays a role in the activation of ITGB1 and integrin signaling, leading to the activation of AKT, FAK/PTK2 and MAP kinases. Promotes cell survival, reorganization of the actin cytoskeleton, cell adhesion, spreading and migration, via its role in the activation of AKT and FAK/PTK2. Plays a role in VEGFA signaling via its role in regulating the internalization of KDR/VEGFR2. Plays a role in intracellular vesicular transport processes, and is required for normal trafficking of the PMEL luminal domain that is essential for the development and maturation of melanocytes. Plays a role in the adhesion of leukocytes onto endothelial cells via its role in the regulation of SELP trafficking. May play a role in mast cell degranulation in response to Ms4a2/FceRI stimulation, but not in mast cell degranulation in response to other stimuli. In Rattus norvegicus (Rat), this protein is CD63 antigen (Cd63).